Here is a 303-residue protein sequence, read N- to C-terminus: 1-acyl-sn-glycerol-3-phosphate acyltransferase (303 aa).

Residues 82–87 carry the HXXXXD motif motif; it reads HQSTLD. Residues 278-303 form a disordered region; sequence NEPVPSVSISNDVNTHNEGSSVKKMH. Residues 284 to 297 show a composition bias toward polar residues; the sequence is VSISNDVNTHNEGS.

This sequence belongs to the 1-acyl-sn-glycerol-3-phosphate acyltransferase family.

The protein localises to the lipid droplet. The enzyme catalyses a 1-acyl-sn-glycero-3-phosphate + an acyl-CoA = a 1,2-diacyl-sn-glycero-3-phosphate + CoA. It carries out the reaction a 1-acyl-sn-glycero-3-phosphocholine + an acyl-CoA = a 1,2-diacyl-sn-glycero-3-phosphocholine + CoA. The catalysed reaction is a 1-acyl-sn-glycero-3-phosphoethanolamine + an acyl-CoA = a 1,2-diacyl-sn-glycero-3-phosphoethanolamine + CoA. It catalyses the reaction 1-hexadecanoyl-sn-glycero-3-phosphate + (9Z)-octadecenoyl-CoA = 1-hexadecanoyl-2-(9Z-octadecenoyl)-sn-glycero-3-phosphate + CoA. The enzyme catalyses 1-octadecanoyl-sn-glycero-3-phosphate + (9Z)-octadecenoyl-CoA = 1-octadecanoyl-2-(9Z-octadecenoyl)-sn-glycero-3-phosphate + CoA. It carries out the reaction 1-(9Z-octadecenoyl)-sn-glycero-3-phospho-L-serine + (9Z)-octadecenoyl-CoA = 1,2-di-(9Z)-octadecenoyl-sn-glycero-3-phospho-L-serine + CoA. The catalysed reaction is a 1-acyl-sn-glycero-3-phospho-(1D-myo-inositol) + (9Z)-octadecenoyl-CoA = a 1-acyl-2-(9Z-octadecenoyl)-sn-glycero-3-phospho-(1D-myo-inositol) + CoA. It catalyses the reaction 1-heptadecanoyl-sn-glycero-3-phosphate + (9Z)-octadecenoyl-CoA = 1-heptadecanoyl-2-(9Z)-octadecenoyl-sn-glycero-3-phosphate + CoA. The enzyme catalyses 1-heptadecanoyl-sn-glycero-3-phosphate + dodecanoyl-CoA = 1-heptadecanoyl-2-dodecanoyl-sn-glycero-3-phosphate + CoA. It carries out the reaction 1-heptadecanoyl-sn-glycero-3-phosphate + tetradecanoyl-CoA = 1-heptadecanoyl-2-tetradecanoyl-sn-glycero-3-phosphate + CoA. Its pathway is phospholipid metabolism; CDP-diacylglycerol biosynthesis; CDP-diacylglycerol from sn-glycerol 3-phosphate: step 2/3. Acyltransferase that catalyzes the sn-2-specific, acyl-CoA-dependent acylation of lysophosphatidic acid (LPA) to phosphatidic acid (PA) in lipid particles. Together with ALE1, plays a central role in PA biosynthesis. PA is the intermediate, from which all glycerophospholipids are synthesized. Can also acylate lysophosphoinositol (LPI) and lysophosphoserine (LPS). The fatty acyl substrates include 18:1-acyl-CoA, 14:0-acyl-CoA, 12:0-acyl-CoA and 10:0-acyl-CoA. The protein is 1-acyl-sn-glycerol-3-phosphate acyltransferase of Saccharomyces cerevisiae (strain ATCC 204508 / S288c) (Baker's yeast).